The primary structure comprises 427 residues: MQLPTNVSSLRGMIEVPGDKSISHRAVMLGALASGRTVIDHFLPGADCLSTIDCFRKLGVDIRQDGTTVVVEGAGPGGLREPAAVLDVGNSGTTARLLLGILAGQPFHACLVGDESIAKRPMGRVTKPLREMGARIDGREGGNYTPLSIRGGALRPLRYTSPVASAQVKSAILLAGLFADGVTSVAEPHRSRDHTERMVRLFGGEVNVDGLTVSVAGPQRLRGTHIYVPGDISSAAFFLVAGAIVPNSEITLKNVGLNPTRTGIIDVLTQMGADIAIDNVRNEETEPVGDITVRTSTLRAVEIGGDLIPRLIDEIPIIALLATQAEGTTVIKDASELKVKETNRIHTVVTELKKLGADIEATDDGMMIRGKTPLYADGIVVDSHGDHRIGMMLAVAACIAKGTVRLERSEAVAVSYPAFFADLRSLL.

3-phosphoshikimate contacts are provided by Lys-20, Ser-21, and Arg-25. Position 20 (Lys-20) interacts with phosphoenolpyruvate. Phosphoenolpyruvate is bound by residues Gly-92 and Arg-120. 3-phosphoshikimate-binding residues include Ser-165, Gln-167, Asp-313, and Lys-340. Gln-167 contributes to the phosphoenolpyruvate binding site. The active-site Proton acceptor is the Asp-313. Arg-344 and Arg-388 together coordinate phosphoenolpyruvate.

The protein belongs to the EPSP synthase family. Monomer.

It is found in the cytoplasm. The enzyme catalyses 3-phosphoshikimate + phosphoenolpyruvate = 5-O-(1-carboxyvinyl)-3-phosphoshikimate + phosphate. The protein operates within metabolic intermediate biosynthesis; chorismate biosynthesis; chorismate from D-erythrose 4-phosphate and phosphoenolpyruvate: step 6/7. Catalyzes the transfer of the enolpyruvyl moiety of phosphoenolpyruvate (PEP) to the 5-hydroxyl of shikimate-3-phosphate (S3P) to produce enolpyruvyl shikimate-3-phosphate and inorganic phosphate. In Geobacillus kaustophilus (strain HTA426), this protein is 3-phosphoshikimate 1-carboxyvinyltransferase.